A 347-amino-acid polypeptide reads, in one-letter code: Holliday junction branch migration complex subunit RuvB (347 aa).

The interval 1–183 is large ATPase domain (RuvB-L); sequence MSEERFVSGH…FGVVLQLQFY (183 aa). ATP is bound by residues leucine 22, arginine 23, glycine 64, lysine 67, threonine 68, threonine 69, 130–132, arginine 173, tyrosine 183, and arginine 220; that span reads EDF. Threonine 68 contributes to the Mg(2+) binding site. The segment at 184–254 is small ATPAse domain (RuvB-S); the sequence is SEEELTRILM…VADAGLRMMG (71 aa). Residues 257–347 are head domain (RuvB-H); it reads AMGLDTVDHK…PEGPVQPRLF (91 aa). Positions 312 and 317 each coordinate DNA.

It belongs to the RuvB family. As to quaternary structure, homohexamer. Forms an RuvA(8)-RuvB(12)-Holliday junction (HJ) complex. HJ DNA is sandwiched between 2 RuvA tetramers; dsDNA enters through RuvA and exits via RuvB. An RuvB hexamer assembles on each DNA strand where it exits the tetramer. Each RuvB hexamer is contacted by two RuvA subunits (via domain III) on 2 adjacent RuvB subunits; this complex drives branch migration. In the full resolvosome a probable DNA-RuvA(4)-RuvB(12)-RuvC(2) complex forms which resolves the HJ.

The protein resides in the cytoplasm. The enzyme catalyses ATP + H2O = ADP + phosphate + H(+). The RuvA-RuvB-RuvC complex processes Holliday junction (HJ) DNA during genetic recombination and DNA repair, while the RuvA-RuvB complex plays an important role in the rescue of blocked DNA replication forks via replication fork reversal (RFR). RuvA specifically binds to HJ cruciform DNA, conferring on it an open structure. The RuvB hexamer acts as an ATP-dependent pump, pulling dsDNA into and through the RuvAB complex. RuvB forms 2 homohexamers on either side of HJ DNA bound by 1 or 2 RuvA tetramers; 4 subunits per hexamer contact DNA at a time. Coordinated motions by a converter formed by DNA-disengaged RuvB subunits stimulates ATP hydrolysis and nucleotide exchange. Immobilization of the converter enables RuvB to convert the ATP-contained energy into a lever motion, pulling 2 nucleotides of DNA out of the RuvA tetramer per ATP hydrolyzed, thus driving DNA branch migration. The RuvB motors rotate together with the DNA substrate, which together with the progressing nucleotide cycle form the mechanistic basis for DNA recombination by continuous HJ branch migration. Branch migration allows RuvC to scan DNA until it finds its consensus sequence, where it cleaves and resolves cruciform DNA. The protein is Holliday junction branch migration complex subunit RuvB of Symbiobacterium thermophilum (strain DSM 24528 / JCM 14929 / IAM 14863 / T).